The following is a 430-amino-acid chain: Enolase (430 aa).

Q163 contacts (2R)-2-phosphoglycerate. The Proton donor role is filled by E205. Mg(2+)-binding residues include D242, E288, and D315. (2R)-2-phosphoglycerate-binding residues include K340, R369, S370, and K391. K340 serves as the catalytic Proton acceptor.

It belongs to the enolase family. It depends on Mg(2+) as a cofactor.

The protein localises to the cytoplasm. It localises to the secreted. It is found in the cell surface. It catalyses the reaction (2R)-2-phosphoglycerate = phosphoenolpyruvate + H2O. It participates in carbohydrate degradation; glycolysis; pyruvate from D-glyceraldehyde 3-phosphate: step 4/5. In terms of biological role, catalyzes the reversible conversion of 2-phosphoglycerate (2-PG) into phosphoenolpyruvate (PEP). It is essential for the degradation of carbohydrates via glycolysis. The sequence is that of Enolase from Phytoplasma australiense.